Consider the following 338-residue polypeptide: Nicotinate-nucleotide--dimethylbenzimidazole phosphoribosyltransferase (338 aa).

Catalysis depends on glutamate 305, which acts as the Proton acceptor.

This sequence belongs to the CobT family.

It catalyses the reaction 5,6-dimethylbenzimidazole + nicotinate beta-D-ribonucleotide = alpha-ribazole 5'-phosphate + nicotinate + H(+). It participates in nucleoside biosynthesis; alpha-ribazole biosynthesis; alpha-ribazole from 5,6-dimethylbenzimidazole: step 1/2. Functionally, catalyzes the synthesis of alpha-ribazole-5'-phosphate from nicotinate mononucleotide (NAMN) and 5,6-dimethylbenzimidazole (DMB). This Rhizobium johnstonii (strain DSM 114642 / LMG 32736 / 3841) (Rhizobium leguminosarum bv. viciae) protein is Nicotinate-nucleotide--dimethylbenzimidazole phosphoribosyltransferase.